A 347-amino-acid polypeptide reads, in one-letter code: Protein RecA (347 aa).

Position 67 to 74 (67 to 74 (GPESSGKT)) interacts with ATP. A disordered region spans residues 326 to 347 (DKLLPGRAPSSEAQGTESGQEA). Positions 336–347 (SEAQGTESGQEA) are enriched in polar residues.

The protein belongs to the RecA family.

The protein localises to the cytoplasm. In terms of biological role, can catalyze the hydrolysis of ATP in the presence of single-stranded DNA, the ATP-dependent uptake of single-stranded DNA by duplex DNA, and the ATP-dependent hybridization of homologous single-stranded DNAs. It interacts with LexA causing its activation and leading to its autocatalytic cleavage. The protein is Protein RecA of Alkalilimnicola ehrlichii (strain ATCC BAA-1101 / DSM 17681 / MLHE-1).